The following is a 295-amino-acid chain: Tyrosine recombinase XerC (295 aa).

In terms of domain architecture, Core-binding (CB) spans 1 to 85 (MQTYLQKYWN…ALRQFLAFLV (85 aa)). One can recognise a Tyr recombinase domain in the interval 106 to 285 (HLPKNINAEQ…NFQHLAEVYD (180 aa)). Active-site residues include Arg-145, Lys-169, His-237, Arg-240, and His-263. Tyr-272 (O-(3'-phospho-DNA)-tyrosine intermediate) is an active-site residue.

The protein belongs to the 'phage' integrase family. XerC subfamily. Forms a cyclic heterotetrameric complex composed of two molecules of XerC and two molecules of XerD.

It localises to the cytoplasm. Its function is as follows. Site-specific tyrosine recombinase, which acts by catalyzing the cutting and rejoining of the recombining DNA molecules. The XerC-XerD complex is essential to convert dimers of the bacterial chromosome into monomers to permit their segregation at cell division. It also contributes to the segregational stability of plasmids. The protein is Tyrosine recombinase XerC of Mannheimia succiniciproducens (strain KCTC 0769BP / MBEL55E).